We begin with the raw amino-acid sequence, 701 residues long: Glycine--tRNA ligase beta subunit (701 aa).

This sequence belongs to the class-II aminoacyl-tRNA synthetase family. Tetramer of two alpha and two beta subunits.

It localises to the cytoplasm. The enzyme catalyses tRNA(Gly) + glycine + ATP = glycyl-tRNA(Gly) + AMP + diphosphate. This Helicobacter pylori (strain HPAG1) protein is Glycine--tRNA ligase beta subunit.